Consider the following 59-residue polypeptide: uncharacterized protein (59 aa).

This is an uncharacterized protein from Archaeoglobus fulgidus (strain ATCC 49558 / DSM 4304 / JCM 9628 / NBRC 100126 / VC-16).